Reading from the N-terminus, the 385-residue chain is DNA replication and repair protein RecF (385 aa).

30-37 (GPNGNGKT) contacts ATP.

The protein belongs to the RecF family.

It localises to the cytoplasm. Functionally, the RecF protein is involved in DNA metabolism; it is required for DNA replication and normal SOS inducibility. RecF binds preferentially to single-stranded, linear DNA. It also seems to bind ATP. The chain is DNA replication and repair protein RecF from Mycobacterium leprae (strain Br4923).